We begin with the raw amino-acid sequence, 140 residues long: Cytochrome b (140 aa).

A helical transmembrane segment spans residues 38–58; it reads FFALHFLLPFVLAALVIMHLI. Heme b-binding residues include H42 and H56. H61 is an a ubiquinone binding site. A helical membrane pass occupies residues 85–105; it reads FVFKDLVTIFIFFIVLSIFVF.

It belongs to the cytochrome b family. As to quaternary structure, fungal cytochrome b-c1 complex contains 10 subunits; 3 respiratory subunits, 2 core proteins and 5 low-molecular weight proteins. Cytochrome b-c1 complex is a homodimer. It depends on heme b as a cofactor.

Its subcellular location is the mitochondrion inner membrane. In terms of biological role, component of the ubiquinol-cytochrome c reductase complex (complex III or cytochrome b-c1 complex) that is part of the mitochondrial respiratory chain. The b-c1 complex mediates electron transfer from ubiquinol to cytochrome c. Contributes to the generation of a proton gradient across the mitochondrial membrane that is then used for ATP synthesis. The protein is Cytochrome b (cob) of Aspergillus terreus.